The chain runs to 187 residues: ATP synthase subunit b 2 (187 aa).

The segment covering 1–12 (MAQERAEHESAD) has biased composition (basic and acidic residues). The tract at residues 1–31 (MAQERAEHESADQHTTSTGVPHEGQGEPFPP) is disordered. Residues 40 to 60 (LLIWLAISFLLLYALMSKLVL) traverse the membrane as a helical segment.

Belongs to the ATPase B chain family. F-type ATPases have 2 components, F(1) - the catalytic core - and F(0) - the membrane proton channel. F(1) has five subunits: alpha(3), beta(3), gamma(1), delta(1), epsilon(1). F(0) has three main subunits: a(1), b(2) and c(10-14). The alpha and beta chains form an alternating ring which encloses part of the gamma chain. F(1) is attached to F(0) by a central stalk formed by the gamma and epsilon chains, while a peripheral stalk is formed by the delta and b chains.

The protein localises to the cell inner membrane. F(1)F(0) ATP synthase produces ATP from ADP in the presence of a proton or sodium gradient. F-type ATPases consist of two structural domains, F(1) containing the extramembraneous catalytic core and F(0) containing the membrane proton channel, linked together by a central stalk and a peripheral stalk. During catalysis, ATP synthesis in the catalytic domain of F(1) is coupled via a rotary mechanism of the central stalk subunits to proton translocation. In terms of biological role, component of the F(0) channel, it forms part of the peripheral stalk, linking F(1) to F(0). The b'-subunit is a diverged and duplicated form of b found in plants and photosynthetic bacteria. The sequence is that of ATP synthase subunit b 2 (atpF2) from Beijerinckia indica subsp. indica (strain ATCC 9039 / DSM 1715 / NCIMB 8712).